Consider the following 139-residue polypeptide: Large ribosomal subunit protein uL16 (139 aa).

Belongs to the universal ribosomal protein uL16 family. As to quaternary structure, part of the 50S ribosomal subunit.

In terms of biological role, binds 23S rRNA and is also seen to make contacts with the A and possibly P site tRNAs. This is Large ribosomal subunit protein uL16 from Crocosphaera subtropica (strain ATCC 51142 / BH68) (Cyanothece sp. (strain ATCC 51142)).